A 550-amino-acid chain; its full sequence is Solute carrier family 22 member 6 (550 aa).

Topologically, residues methionine 1–glutamine 9 are cytoplasmic. The helical transmembrane segment at valine 10–leucine 30 threads the bilayer. Residues methionine 31–glutamine 135 lie on the Extracellular side of the membrane. N-linked (GlcNAc...) asparagine glycosylation is found at asparagine 56, asparagine 92, and asparagine 113. A helical membrane pass occupies residues leucine 136–alanine 156. The Cytoplasmic segment spans residues aspartate 157–valine 164. A helical membrane pass occupies residues leucine 165 to isoleucine 187. Over tyrosine 188 to alanine 190 the chain is Extracellular. The helical transmembrane segment at phenylalanine 191–tryptophan 213 threads the bilayer. At methionine 214 to threonine 224 the chain is on the cytoplasmic side. The helical transmembrane segment at leucine 225 to proline 245 threads the bilayer. The Extracellular segment spans residues histidine 246 to arginine 248. Residues histidine 249–isoleucine 269 form a helical membrane-spanning segment. Residues glutamate 270–histidine 337 lie on the Cytoplasmic side of the membrane. Residues leucine 338–methionine 358 traverse the membrane as a helical segment. At aspartate 359–tyrosine 368 the chain is on the extracellular side. A helical membrane pass occupies residues leucine 369–isoleucine 389. Topologically, residues asparagine 390–arginine 395 are cytoplasmic. A helical membrane pass occupies residues proline 396–proline 416. The Extracellular portion of the chain corresponds to glutamine 417–serine 425. Residues leucine 426–glycine 446 form a helical membrane-spanning segment. At glutamate 447–threonine 456 the chain is on the cytoplasmic side. A helical transmembrane segment spans residues glycine 457–methionine 477. Residues threonine 478–serine 484 lie on the Extracellular side of the membrane. The chain crosses the membrane as a helical span at residues valine 485–proline 505. Topologically, residues glutamate 506–leucine 550 are cytoplasmic. Residues proline 513 to leucine 550 form a disordered region.

This sequence belongs to the major facilitator (TC 2.A.1) superfamily. Organic cation transporter (TC 2.A.1.19) family. Glycosylated. Glycosylation is necessary for proper targeting of the transporter to the plasma membrane. As to expression, expressed in kidney; in the basolateral membrane of the proximal tubule.

Its subcellular location is the basolateral cell membrane. The protein resides in the basal cell membrane. It catalyses the reaction (6R)-L-erythro-5,6,7,8-tetrahydrobiopterin(out) + a dicarboxylate(in) = (6R)-L-erythro-5,6,7,8-tetrahydrobiopterin(in) + a dicarboxylate(out). The enzyme catalyses L-erythro-7,8-dihydrobiopterin(out) + a dicarboxylate(in) = L-erythro-7,8-dihydrobiopterin(in) + a dicarboxylate(out). It carries out the reaction L-sepiapterin(out) + a dicarboxylate(in) = L-sepiapterin(in) + a dicarboxylate(out). The catalysed reaction is prostaglandin F2alpha(out) + a dicarboxylate(in) = prostaglandin F2alpha(in) + a dicarboxylate(out). It catalyses the reaction prostaglandin E2(out) + a dicarboxylate(in) = prostaglandin E2(in) + a dicarboxylate(out). The enzyme catalyses 3',5'-cyclic AMP(out) + a dicarboxylate(in) = 3',5'-cyclic AMP(in) + a dicarboxylate(out). It carries out the reaction 3',5'-cyclic GMP(out) + a dicarboxylate(in) = 3',5'-cyclic GMP(in) + a dicarboxylate(out). The catalysed reaction is urate(out) + a dicarboxylate(in) = urate(in) + a dicarboxylate(out). It catalyses the reaction kynurenate(out) + glutarate(in) = kynurenate(in) + glutarate(out). The enzyme catalyses (indol-3-yl)acetate(out) + a dicarboxylate(in) = (indol-3-yl)acetate(in) + a dicarboxylate(out). It carries out the reaction indoxyl sulfate(out) + a dicarboxylate(in) = indoxyl sulfate(in) + a dicarboxylate(out). The catalysed reaction is N-benzoylglycine(out) + a dicarboxylate(in) = N-benzoylglycine(in) + a dicarboxylate(out). It catalyses the reaction 3-carboxy-4-methyl-5-propyl-2-furanpropanoate(out) + a dicarboxylate(in) = 3-carboxy-4-methyl-5-propyl-2-furanpropanoate(in) + a dicarboxylate(out). Secondary active transporter that functions as a Na(+)-independent organic anion (OA)/dicarboxylate antiporter where the uptake of one molecule of OA into the cell is coupled with an efflux of one molecule of intracellular dicarboxylate such as 2-oxoglutarate or glutarate. Mediates the uptake of OA across the basolateral side of proximal tubule epithelial cells, thereby contributing to the renal elimination of endogenous OA from the systemic circulation into the urine. Functions as a biopterin transporters involved in the uptake and the secretion of coenzymes tetrahydrobiopterin (BH4), dihydrobiopterin (BH2) and sepiapterin to urine, thereby determining baseline levels of blood biopterins. Transports prostaglandin E2 (PGE2) and prostaglandin F2-alpha (PGF2-alpha) and may contribute to their renal excretion. Also mediates the uptake of cyclic nucleotides such as cAMP and cGMP. Involved in the transport of neuroactive tryptophan metabolites kynurenate (KYNA) and xanthurenate (XA) and may contribute to their secretion from the brain. May transport glutamate. Also involved in the disposition of uremic toxins and potentially toxic xenobiotics by the renal organic anion secretory pathway, helping reduce their undesired toxicological effects on the body. Uremic toxins include the indoxyl sulfate (IS), hippurate/N-benzoylglycine (HA), indole acetate (IA), 3-carboxy-4- methyl-5-propyl-2-furanpropionate (CMPF) and urate. Xenobiotics include the mycotoxin ochratoxin (OTA). May also contribute to the transport of organic compounds in testes across the blood-testis-barrier. The chain is Solute carrier family 22 member 6 from Macaca fascicularis (Crab-eating macaque).